The chain runs to 422 residues: Histidine--tRNA ligase (422 aa).

Belongs to the class-II aminoacyl-tRNA synthetase family. Homodimer.

It is found in the cytoplasm. It carries out the reaction tRNA(His) + L-histidine + ATP = L-histidyl-tRNA(His) + AMP + diphosphate + H(+). In Vibrio cholerae serotype O1 (strain ATCC 39541 / Classical Ogawa 395 / O395), this protein is Histidine--tRNA ligase.